A 465-amino-acid chain; its full sequence is Soluble pyridine nucleotide transhydrogenase (465 aa).

Glutamate 36–cysteine 45 contacts FAD.

It belongs to the class-I pyridine nucleotide-disulfide oxidoreductase family. FAD is required as a cofactor.

The protein resides in the cytoplasm. The enzyme catalyses NAD(+) + NADPH = NADH + NADP(+). Functionally, conversion of NADPH, generated by peripheral catabolic pathways, to NADH, which can enter the respiratory chain for energy generation. In Sodalis glossinidius (strain morsitans), this protein is Soluble pyridine nucleotide transhydrogenase.